Here is a 400-residue protein sequence, read N- to C-terminus: MADGGIDRKADEKIQFSTSKEVTVHPTFESMSLKESLLRGIYAYGYESPSAVQSRAIVQICKGRDTIAQAQSGTGKTATFSISMLQVIDTAVRETQALVLSPTRELATQIQSVVMALGDYMNVQCHACIGGTNVGEDIRKLDYGQHIVSGTPGRVADMIRRRHLRTRHIKMLVLDEADELLNQGFREQIYDVYRYLPPATQVVVVSATLPYDVLDMTTKFMTDPVRILVKRDELTLEGLKQYFIAVEKEDWKFDTLCDLYDTLTITQAVIFCNTRRKVDWLTDKMREANFTVSSMHGDMPQKERDSIMQDFRQGNSRVLISTDVWARGIDVQQVSLVINYDLPSNRENYIHRIGRSGRFGRKGVAINFVTSEDVRILRDIELYYSTQIDEMPMNVADLIS.

The short motif at 26–54 (PTFESMSLKESLLRGIYAYGYESPSAVQS) is the Q motif element. A Helicase ATP-binding domain is found at 57 to 227 (IVQICKGRDT…TKFMTDPVRI (171 aa)). Residue 70–77 (AQSGTGKT) participates in ATP binding. The DEAD box signature appears at 175 to 178 (DEAD). A Helicase C-terminal domain is found at 238–399 (GLKQYFIAVE…EMPMNVADLI (162 aa)).

The protein belongs to the DEAD box helicase family. DDX48/FAL1 subfamily.

The protein localises to the nucleus. It is found in the nucleolus. The catalysed reaction is ATP + H2O = ADP + phosphate + H(+). Its function is as follows. ATP-dependent RNA helicase involved in 40S ribosomal subunit biogenesis. Required for the processing and cleavage of 35S pre-rRNA at sites A0, A1, and A2, leading to mature 18S rRNA. The protein is ATP-dependent RNA helicase fal-1 (fal-1) of Neurospora crassa (strain ATCC 24698 / 74-OR23-1A / CBS 708.71 / DSM 1257 / FGSC 987).